A 2531-amino-acid polypeptide reads, in one-letter code: Highly reducing polyketide synthase ausV (2531 aa).

The 426-residue stretch at 7-432 (STPIAIIGLS…GTNAHCVMET (426 aa)) folds into the Ketosynthase family 3 (KS3) domain. Catalysis depends on for beta-ketoacyl synthase activity residues cysteine 180, histidine 315, and histidine 355. The malonyl-CoA:ACP transacylase (MAT) domain stretch occupies residues 554–882 (FVFTGQGAQW…HHTLLESMGS (329 aa)). Residue serine 644 is the For malonyltransferase activity of the active site. The segment at 939–1069 (HDLCGIRVED…GSVLAGTPSD (131 aa)) is N-terminal hotdog fold. In terms of domain architecture, PKS/mFAS DH spans 939-1238 (HDLCGIRVED…LATLSVRSGD (300 aa)). Residues 940-1236 (DLCGIRVEDD…LELATLSVRS (297 aa)) form a dehydratase (DH) domain region. Histidine 971 functions as the Proton acceptor; for dehydratase activity in the catalytic mechanism. Residues 1087 to 1238 (YVETTPRQAY…LATLSVRSGD (152 aa)) are C-terminal hotdog fold. Aspartate 1152 acts as the Proton donor; for dehydratase activity in catalysis. Residues 1414-1592 (SSYLRLHARN…DTGFSGVDIS (179 aa)) are methyltransferase (CMet) domain. Positions 1832–2133 (LRFVQDPAYW…SGGAKPGCSR (302 aa)) are enoyl reductase (ER) domain. The tract at residues 2156 to 2331 (HGRALVPDFH…AGVSLSLGFI (176 aa)) is ketoreductase (KR) domain. Residues 2444–2521 (AAATAVLDAL…ELARDLALRS (78 aa)) enclose the Carrier domain. Residue serine 2481 is modified to O-(pantetheine 4'-phosphoryl)serine.

It functions in the pathway secondary metabolite biosynthesis; terpenoid biosynthesis. Its function is as follows. Highly reducing polyketide synthase; part of the gene cluster that mediates the biosynthesis of calidodehydroaustin, a fungal meroterpenoid. The first step of the pathway is the synthesis of 3,5-dimethylorsellinic acid by the polyketide synthase ausA. 3,5-dimethylorsellinic acid is then prenylated by the polyprenyl transferase ausN. Further epoxidation by the FAD-dependent monooxygenase ausM and cyclization by the probable terpene cyclase ausL lead to the formation of protoaustinoid A. Protoaustinoid A is then oxidized to spiro-lactone preaustinoid A3 by the combined action of the FAD-binding monooxygenases ausB and ausC, and the dioxygenase ausE. Acid-catalyzed keto-rearrangement and ring contraction of the tetraketide portion of preaustinoid A3 by ausJ lead to the formation of preaustinoid A4. The aldo-keto reductase ausK, with the help of ausH, is involved in the next step by transforming preaustinoid A4 into isoaustinone which is in turn hydroxylated by the P450 monooxygenase ausI to form austinolide. The cytochrome P450 monooxygenase ausG modifies austinolide to austinol. Austinol is further acetylated to austin by the O-acetyltransferase ausP, which spontaneously changes to dehydroaustin. The cytochrome P450 monooxygenase ausR then converts dehydroaustin is into 7-dehydrodehydroaustin. The hydroxylation catalyzed by ausR permits the O-acetyltransferase ausQ to add an additional acetyl group to the molecule, leading to the formation of acetoxydehydroaustin. The short chain dehydrogenase ausT catalyzes the reduction of the double bond present between carbon atoms 1 and 2 to convert 7-dehydrodehydroaustin into 1,2-dihydro-7-hydroxydehydroaustin. AusQ catalyzes not only an acetylation reaction but also the addition of the PKS ausV diketide product to 1,2-dihydro-7-hydroxydehydroaustin, forming precalidodehydroaustin. Finally, the iron/alpha-ketoglutarate-dependent dioxygenase converts precalidodehydroaustin into calidodehydroaustin. The protein is Highly reducing polyketide synthase ausV of Aspergillus calidoustus.